Here is a 1687-residue protein sequence, read N- to C-terminus: Muscle calcium channel subunit alpha-1 (1687 aa).

The tract at residues 1–33 (MDDAVCPTETDNVQNKQKATTPKRTQRRGGKQQ) is disordered. Residues 1 to 61 (MDDAVCPTET…IFCIKIVDSK (61 aa)) lie on the Cytoplasmic side of the membrane. Residues 9–23 (ETDNVQNKQKATTPK) show a composition bias toward polar residues. An I repeat occupies 48–330 (NPLRIFCIKI…LILGVLSGEF (283 aa)). The chain crosses the membrane as a helical span at residues 62-80 (LFEYFILLTIFANCVALAV). The Extracellular portion of the chain corresponds to 81–99 (YTPYPSGDSNITNQMLEKI). Residue asparagine 90 is glycosylated (N-linked (GlcNAc...) asparagine). A helical membrane pass occupies residues 100–117 (EYIFLVIFTSECVMKIIA). The Cytoplasmic portion of the chain corresponds to 118-130 (YGFVLHTGSYLRN). A helical transmembrane segment spans residues 131-145 (GWNFLDFFIVVIGMI). Topologically, residues 146-157 (STALSNLVKEGF) are extracellular. A helical membrane pass occupies residues 158-176 (DVKALRAFRVLRPLRLVSG). Topologically, residues 177-196 (VPSLQVVLNSILKAMIPLLH) are cytoplasmic. A helical membrane pass occupies residues 197-216 (IALLVLFVIIIYAIIGLELF). Over 217 to 302 (SGKLHKTCRH…SIQDAMGSSW (86 aa)) the chain is Extracellular. A Ca(2+)-binding site is contributed by glutamate 285. The chain crosses the membrane as a helical span at residues 303-327 (EWIYFVSMVILGAFFVMNLILGVLS). Residues 328 to 434 (GEFSKERTKA…RACRKAVKSQ (107 aa)) are Cytoplasmic-facing. An II repeat occupies 420-667 (NRRIRRACRK…VFLAIAVDNL (248 aa)). The chain crosses the membrane as a helical span at residues 435 to 454 (AFYWLIILLVFLNTGVLATE). Topologically, residues 455–467 (HYRQPIWLDQFQE) are extracellular. Residues 468 to 487 (YTNIFFIALFTCEMILKMYS) form a helical membrane-spanning segment. The Cytoplasmic portion of the chain corresponds to 488 to 496 (LGFQGYFVS). Residues 497 to 515 (LFNRFDCFVVIGSISEMVL) form a helical membrane-spanning segment. The Extracellular segment spans residues 516 to 525 (TSSELMAPLG). A helical transmembrane segment spans residues 526–544 (VSVLRCVRLLRVFKVTKYW). The Cytoplasmic segment spans residues 545 to 563 (HSLSNLVASLLNSIQSIAS). Residues 564 to 583 (LLLLLFLFIVIFGLLGMQVF) traverse the membrane as a helical segment. The Extracellular portion of the chain corresponds to 584-639 (GGRFTFKPEEEKPRSNFDSFYQSLLTVFQILTGEDWNVVMYDGIRAYGGVFSFGIV). Position 617 (glutamate 617) interacts with Ca(2+). Residues 640 to 664 (ACIYYIILFICGNYILLNVFLAIAV) form a helical membrane-spanning segment. Residues 665-785 (DNLADADSLS…TNRFRIFCHR (121 aa)) are Cytoplasmic-facing. One copy of the III repeat lies at 777–1059 (NRFRIFCHRL…IFVGFVIVTF (283 aa)). Residues 786 to 809 (LCNHSNFGNFILCCIMFSSAMLAA) form a helical membrane-spanning segment. Residues 810–826 (ENPLKADASRNIVLNKF) lie on the Extracellular side of the membrane. The helical transmembrane segment at 827-846 (DYFFTAVFTIELVLKLISYG) threads the bilayer. Residues 847–854 (FVLHDGAF) lie on the Cytoplasmic side of the membrane. A helical transmembrane segment spans residues 855 to 877 (CRSAFNLLDLLVVCVSLISIFFN). At 878–885 (SNAISVVK) the chain is on the extracellular side. A helical membrane pass occupies residues 886 to 900 (ILRVLRVLRPLRAIN). The Cytoplasmic portion of the chain corresponds to 901 to 921 (RAKGLKHVVQCVIVAVKTIGN). Residues 922-941 (IVLVTCLLQFMFAVIGVQLF) traverse the membrane as a helical segment. Residues 942–1030 (KGKFFSCSDG…NGGPIYNFRP (89 aa)) are Extracellular-facing. Positions 979–1068 (REWKNNKFHF…FQNEGEQEYK (90 aa)) are dihydropyridine binding. Position 1005 (glutamate 1005) interacts with Ca(2+). Residues 1031–1055 (IVAAYYIIYIIIIAFFMVNIFVGFV) traverse the membrane as a helical segment. The Cytoplasmic segment spans residues 1056–1110 (IVTFQNEGEQEYKNCELDKNQRNCIEFALKAKPVRRYIPKHSIQYKVWWFVTSSS). An IV repeat occupies 1096–1370 (HSIQYKVWWF…LFVAVIMDNF (275 aa)). A helical membrane pass occupies residues 1111-1129 (FEYSIFVLIMINTVTLAMK). Over 1130–1143 (FYKQPEYYSEILDA) the chain is Extracellular. The chain crosses the membrane as a helical span at residues 1144-1163 (LNMIFTAVFSLEFIFKLAAF). Topologically, residues 1164 to 1172 (RFKNYFGDA) are cytoplasmic. A helical transmembrane segment spans residues 1173-1191 (WNTFDFIIVLGSFIDIVYS). The Extracellular segment spans residues 1192-1219 (EIKTKEQALATCDGQSCNKAKGGSTLIS). Residues 1220-1238 (INFFRLFRVMRLVKLLSKG) traverse the membrane as a helical segment. The Cytoplasmic segment spans residues 1239-1257 (EGIRTLLWTFIKSFQALPY). The chain crosses the membrane as a helical span at residues 1258–1277 (VALLIVMLFFIYAVIGMQVF). Over 1278–1343 (GKIMLEEGTS…AVNNCGSSIA (66 aa)) the chain is Extracellular. Residues 1327-1389 (KCDPESDAVN…LGPHHLDEFI (63 aa)) form a dihydropyridine binding region. Residues 1337–1378 (NCGSSIAFPYFISFYVLCSFLIINLFVAVIMDNFDYLTRDWS) are phenylalkylamine binding. A helical membrane pass occupies residues 1344–1362 (FPYFISFYVLCSFLIINLF). The Cytoplasmic portion of the chain corresponds to 1363–1687 (VAVIMDNFDY…PKSKDKDEEF (325 aa)).

It belongs to the calcium channel alpha-1 subunit (TC 1.A.1.11) family. Predominantly expressed in the larval body wall musculature. In adults, highest expression in thorax followed by head and at a lower extent by abdomen.

It localises to the membrane. Functionally, voltage-sensitive calcium channels (VSCC) mediate the entry of calcium ions into excitable cells and are also involved in a variety of calcium-dependent processes, including muscle contraction, hormone or neurotransmitter release, gene expression, cell motility, cell division and cell death. MDL-alpha1 encodes a dihydropyridine- and diltiazem-sensitive current in larval body wall muscle. The protein is Muscle calcium channel subunit alpha-1 of Musca domestica (House fly).